Reading from the N-terminus, the 168-residue chain is G/U mismatch-specific DNA glycosylase (168 aa).

The protein belongs to the uracil-DNA glycosylase (UDG) superfamily. TDG/mug family. Binds DNA as a monomer.

Its subcellular location is the cytoplasm. It carries out the reaction Specifically hydrolyzes mismatched double-stranded DNA and polynucleotides, releasing free uracil.. Excises ethenocytosine and uracil, which can arise by alkylation or deamination of cytosine, respectively, from the corresponding mispairs with guanine in ds-DNA. It is capable of hydrolyzing the carbon-nitrogen bond between the sugar-phosphate backbone of the DNA and the mispaired base. The complementary strand guanine functions in substrate recognition. Required for DNA damage lesion repair in stationary-phase cells. The polypeptide is G/U mismatch-specific DNA glycosylase (Shigella dysenteriae serotype 1 (strain Sd197)).